The primary structure comprises 153 residues: MKLIPFPYPLNIGTDVVHLPRILRLINRPDYFHRFTRRILHEQEQRDFRTRFSLPPPSSGAEKTGLNPITPDMARWLAGRFAAKEAARKAAPAGASSLGWKDVIVRVGEADKGRPEIVYLDPMGCGETGGGRVGKLSISHDGDYVVATVLAAG.

Belongs to the P-Pant transferase superfamily.

It is found in the mitochondrion. It carries out the reaction apo-[ACP] + CoA = holo-[ACP] + adenosine 3',5'-bisphosphate + H(+). In terms of biological role, acyl-carrier-protein synthase transfers the 4'-phosphopantetheine moiety from coenzyme A to a Ser of an acyl-carrier-protein. The 4'-phosphopantetheine (4'-PPT) portion of CoA provides the essential prosthetic group for a number of carrier proteins and multi-domain enzymes, priming them for the acceptance of acyl building blocks in fatty acid synthesis and many aspects of secondary metabolism mediated by polyketide synthases (PKSs) and non-ribosomal peptide synthetases (NRPSs). PptB is specific for the mitochondrial acyl carrier protein acpA. In Aspergillus fumigatus (strain ATCC MYA-4609 / CBS 101355 / FGSC A1100 / Af293) (Neosartorya fumigata), this protein is 4'-phosphopantetheinyl transferase B, mitochondrial.